The sequence spans 205 residues: Histidine biosynthesis bifunctional protein HisIE (205 aa).

Residues M1 to I115 form a phosphoribosyl-AMP cyclohydrolase region. Positions L116–K205 are phosphoribosyl-ATP pyrophosphohydrolase.

It in the N-terminal section; belongs to the PRA-CH family. The protein in the C-terminal section; belongs to the PRA-PH family.

It is found in the cytoplasm. The enzyme catalyses 1-(5-phospho-beta-D-ribosyl)-ATP + H2O = 1-(5-phospho-beta-D-ribosyl)-5'-AMP + diphosphate + H(+). It catalyses the reaction 1-(5-phospho-beta-D-ribosyl)-5'-AMP + H2O = 1-(5-phospho-beta-D-ribosyl)-5-[(5-phospho-beta-D-ribosylamino)methylideneamino]imidazole-4-carboxamide. The protein operates within amino-acid biosynthesis; L-histidine biosynthesis; L-histidine from 5-phospho-alpha-D-ribose 1-diphosphate: step 2/9. It functions in the pathway amino-acid biosynthesis; L-histidine biosynthesis; L-histidine from 5-phospho-alpha-D-ribose 1-diphosphate: step 3/9. The polypeptide is Histidine biosynthesis bifunctional protein HisIE (Caldanaerobacter subterraneus subsp. tengcongensis (strain DSM 15242 / JCM 11007 / NBRC 100824 / MB4) (Thermoanaerobacter tengcongensis)).